A 549-amino-acid chain; its full sequence is Probable protein kinase UbiB (549 aa).

Residues 123–501 enclose the Protein kinase domain; sequence DFDDVPLASA…QHKAHKSNYL (379 aa). Residues 129 to 137 and Lys-152 contribute to the ATP site; that span reads LASASIAQV. The active-site Proton acceptor is Asp-287. Helical transmembrane passes span 498-517 and 521-540; these read SNYLLITSAVFVICGTILFT and TLWASLLCLGTGAGLWLLGW.

It belongs to the ABC1 family. UbiB subfamily.

The protein localises to the cell inner membrane. It functions in the pathway cofactor biosynthesis; ubiquinone biosynthesis [regulation]. Is probably a protein kinase regulator of UbiI activity which is involved in aerobic coenzyme Q (ubiquinone) biosynthesis. The protein is Probable protein kinase UbiB of Shewanella denitrificans (strain OS217 / ATCC BAA-1090 / DSM 15013).